Here is a 298-residue protein sequence, read N- to C-terminus: MFKENTIKLGIAPIAWTNDDMPELGAENTFEQCISEMALAGFNGSEVGNKYPRNTVVLKKSLELRNLEIASAWFSAFLTTKPLEETVQAFIKHRDFLHDMGAKVIVVSEQGHSIQGLMDVPLFKNKPVFTEEEWEKLADGLHHLGKLAQEKGLHIVYHHHMGTGVQTTAEIEKLMDMTDPELVSLLFDTGHLVFSGEEPLYILKKYLSRIKHVHLKDIRQEVVDAVKESDLSFLQAVKNGAFTVPGDGVIVFDEVFTILANSDYKGWFVVEAEQDPALANPFEYALKARKFIQEKAGL.

Belongs to the IolE/MocC family. Requires glutathione as cofactor. It depends on Co(2+) as a cofactor. Mn(2+) serves as cofactor.

It catalyses the reaction scyllo-inosose = 3D-3,5/4-trihydroxycyclohexane-1,2-dione + H2O. Its pathway is polyol metabolism; myo-inositol degradation into acetyl-CoA; acetyl-CoA from myo-inositol: step 2/7. Its function is as follows. Catalyzes the dehydration of inosose (2-keto-myo-inositol, 2KMI or 2,4,6/3,5-pentahydroxycyclohexanone) to 3D-(3,5/4)-trihydroxycyclohexane-1,2-dione (D-2,3-diketo-4-deoxy-epi-inositol). The chain is Inosose dehydratase 2 from Bacillus cereus (strain ZK / E33L).